The chain runs to 599 residues: DNA-directed RNA polymerase III subunit RPC3 (599 aa).

Residues 335-371 (PRLDGLRPRGKGSRSVSPRPQSKRVKTEEGYTKTGDY) form a disordered region. Basic and acidic residues predominate over residues 359-371 (VKTEEGYTKTGDY). The segment at 526-547 (IYKSLSRCFERVAAERAKLPIL) is leucine-zipper.

Belongs to the RNA polymerase beta chain family. As to quaternary structure, component of the RNA polymerase III (Pol III) complex consisting of 17 subunits.

Its subcellular location is the nucleus. Functionally, DNA-dependent RNA polymerase catalyzes the transcription of DNA into RNA using the four ribonucleoside triphosphates as substrates. Specific core component of RNA polymerase III which synthesizes small RNAs, such as 5S rRNA and tRNAs. This chain is DNA-directed RNA polymerase III subunit RPC3 (RPC82), found in Yarrowia lipolytica (strain CLIB 122 / E 150) (Yeast).